The sequence spans 246 residues: Peptide methionine sulfoxide reductase (246 aa).

Cysteine 48 functions as the Cysteine sulfenic acid (-SOH) intermediate in the catalytic mechanism. A disulfide bond links cysteine 48 and cysteine 246.

In terms of processing, conjugated to URM1, a ubiquitin-like protein.

It carries out the reaction L-methionyl-[protein] + [thioredoxin]-disulfide + H2O = L-methionyl-(S)-S-oxide-[protein] + [thioredoxin]-dithiol. The enzyme catalyses [thioredoxin]-disulfide + L-methionine + H2O = L-methionine (S)-S-oxide + [thioredoxin]-dithiol. Its function is as follows. Has an important function as a repair enzyme for proteins that have been inactivated by oxidation. Catalyzes the reduction of methionine sulfoxide in proteins to methionine. Does not catalyze the reverse reaction involving the oxidation of methionine residues. This chain is Peptide methionine sulfoxide reductase, found in Drosophila melanogaster (Fruit fly).